Here is a 698-residue protein sequence, read N- to C-terminus: ATP-dependent RNA helicase DHX33 (698 aa).

2 disordered regions span residues 1 to 20 (MPEE…SCPP) and 29 to 50 (TAGG…AQPS). A required for nucleolar location region spans residues 1-71 (MPEEASLPPA…RRSLPIFRAR (71 aa)). The segment covering 30–40 (AGGGGGAGGGR) has biased composition (gly residues). A Helicase ATP-binding domain is found at 75–243 (LAQLRNLDNA…FNRAPVLYLE (169 aa)). 88–95 (GETGSGKT) serves as a coordination point for ATP. The DEAH box motif lies at 185 to 188 (DEAH). Positions 271–441 (QIHQEAPASQ…SVILQLLAMK (171 aa)) constitute a Helicase C-terminal domain. The HA2; required for interaction with EIF3G and RPL26 stretch occupies residues 462-553 (AIAQLDLLGA…ISSEGDHITL (92 aa)). A Critical for rDNA-binding motif is present at residues 536-550 (VQSVRKKFISSEGDH).

The protein belongs to the DEAD box helicase family. DEAH subfamily. As to quaternary structure, interacts with UBTF. Interacts with DDX3X, EIF3G and EIF3H; the interaction is independent of RNA. Interacts (via HA2 region and Helicase C-terminal domain) with the components of the large ribosomal subunit RPL3, RPL7, RPL26 and RPL27. Binds to mRNA. Interacts (via the helicase C-terminal domain) with MAVS. Binds to double-stranded RNA (via the helicase C-terminal domain). In terms of processing, ubiquitinated, leading to its degradation by the proteasome. Deubiquitinated by USP36.

The protein resides in the nucleus. It is found in the nucleolus. Its subcellular location is the nucleoplasm. It localises to the cytoplasm. The protein localises to the inflammasome. It catalyses the reaction ATP + H2O = ADP + phosphate + H(+). Its function is as follows. Implicated in nucleolar organization, ribosome biogenesis, protein synthesis and cytoplasmic dsRNA sensing. Stimulates RNA polymerase I transcription of the 47S precursor rRNA. Associates with ribosomal DNA (rDNA) loci where it is involved in POLR1A recruitment. In the cytoplasm, promotes elongation-competent 80S ribosome assembly at the late stage of mRNA translation initiation. Senses cytosolic dsRNA mediating NLRP3 inflammasome formation in macrophages and type I interferon production in myeloid dendritic cells. Required for NLRP3 activation induced by viral dsRNA and bacterial RNA. In dendritic cells, required for induction of type I interferon production induced by cytoplasmic dsRNA via the activation of MAPK and NF-kappa-B signaling pathways. The protein is ATP-dependent RNA helicase DHX33 of Mus musculus (Mouse).